A 445-amino-acid polypeptide reads, in one-letter code: UDP-N-acetylglucosamine--peptide N-acetylglucosaminyltransferase stabilizing protein GtfB (445 aa).

A glycosyltransferase 1 region spans residues 55–171 (KPLYFNQVPV…TLPGQSMRYF (117 aa)).

It belongs to the GtfB family. Interacts with glycosyltransferase GtfA; probably forms a heterotetramer with 2 subunits each of GtfA and GtfB. Part of the accessory SecA2/SecY2 protein translocation apparatus.

It is found in the cell membrane. It participates in protein modification; protein glycosylation. Functionally, required for the polymorphic O-glycosylation of the serine-rich repeat protein PsrP. A stabilizing protein that is part of the accessory SecA2/SecY2 system specifically required to export serine-rich repeat cell wall proteins encoded upstream in the same operon. The GtfA-GtfB complex adds GlcNAc from UDP-GlcNAc to PsrP, attaching the first sugar residue. Stabilizes the glycosylation activity of GtfA. Has no N-acetylglucosaminyl transferase activity on its own. This is UDP-N-acetylglucosamine--peptide N-acetylglucosaminyltransferase stabilizing protein GtfB from Streptococcus pneumoniae serotype 4 (strain ATCC BAA-334 / TIGR4).